The sequence spans 508 residues: Photosystem II CP47 reaction center protein (508 aa).

6 helical membrane passes run 21 to 36, 101 to 115, 140 to 156, 203 to 218, 237 to 252, and 457 to 472; these read SVHI…WAGS, IVFS…IWHW, GIHL…FGAF, IAAG…FHLS, VLSS…AFVV, and SFAL…HGAR.

The protein belongs to the PsbB/PsbC family. PsbB subfamily. In terms of assembly, PSII is composed of 1 copy each of membrane proteins PsbA, PsbB, PsbC, PsbD, PsbE, PsbF, PsbH, PsbI, PsbJ, PsbK, PsbL, PsbM, PsbT, PsbX, PsbY, PsbZ, Psb30/Ycf12, at least 3 peripheral proteins of the oxygen-evolving complex and a large number of cofactors. It forms dimeric complexes. It depends on Binds multiple chlorophylls. PSII binds additional chlorophylls, carotenoids and specific lipids. as a cofactor.

It is found in the plastid. The protein resides in the chloroplast thylakoid membrane. One of the components of the core complex of photosystem II (PSII). It binds chlorophyll and helps catalyze the primary light-induced photochemical processes of PSII. PSII is a light-driven water:plastoquinone oxidoreductase, using light energy to abstract electrons from H(2)O, generating O(2) and a proton gradient subsequently used for ATP formation. The chain is Photosystem II CP47 reaction center protein from Atropa belladonna (Belladonna).